A 792-amino-acid polypeptide reads, in one-letter code: Xaa-Pro dipeptidyl-peptidase (792 aa).

Residues S363, D482, and H513 each act as charge relay system in the active site.

Belongs to the peptidase S15 family. In terms of assembly, homodimer.

Its subcellular location is the cytoplasm. The catalysed reaction is Hydrolyzes Xaa-Pro-|- bonds to release unblocked, N-terminal dipeptides from substrates including Ala-Pro-|-p-nitroanilide and (sequentially) Tyr-Pro-|-Phe-Pro-|-Gly-Pro-|-Ile.. Removes N-terminal dipeptides sequentially from polypeptides having unsubstituted N-termini provided that the penultimate residue is proline. This chain is Xaa-Pro dipeptidyl-peptidase, found in Lactobacillus delbrueckii subsp. bulgaricus (strain ATCC 11842 / DSM 20081 / BCRC 10696 / JCM 1002 / NBRC 13953 / NCIMB 11778 / NCTC 12712 / WDCM 00102 / Lb 14).